A 219-amino-acid polypeptide reads, in one-letter code: Thymidylate kinase (219 aa).

An ATP-binding site is contributed by 7–14 (GIDGAGKS).

This sequence belongs to the thymidylate kinase family.

The catalysed reaction is dTMP + ATP = dTDP + ADP. Functionally, phosphorylation of dTMP to form dTDP in both de novo and salvage pathways of dTTP synthesis. The polypeptide is Thymidylate kinase (Chlorobium limicola (strain DSM 245 / NBRC 103803 / 6330)).